A 441-amino-acid polypeptide reads, in one-letter code: Cobyrinate a,c-diamide synthase (441 aa).

In terms of domain architecture, GATase cobBQ-type spans 243–434 (TVAVADDAAF…AHVHPESTAF (192 aa)). Cysteine 323 serves as the catalytic Nucleophile.

The protein belongs to the CobB/CbiA family. Mg(2+) is required as a cofactor.

It catalyses the reaction cob(II)yrinate + 2 L-glutamine + 2 ATP + 2 H2O = cob(II)yrinate a,c diamide + 2 L-glutamate + 2 ADP + 2 phosphate + 2 H(+). It participates in cofactor biosynthesis; adenosylcobalamin biosynthesis; cob(II)yrinate a,c-diamide from sirohydrochlorin (anaerobic route): step 10/10. Its function is as follows. Catalyzes the ATP-dependent amidation of the two carboxylate groups at positions a and c of cobyrinate, using either L-glutamine or ammonia as the nitrogen source. This chain is Cobyrinate a,c-diamide synthase, found in Halobacterium salinarum (strain ATCC 700922 / JCM 11081 / NRC-1) (Halobacterium halobium).